A 119-amino-acid chain; its full sequence is Chorion class CA protein ERA.1 (119 aa).

A signal peptide spans 1–21 (MSTFAVLLLCVQACLIQNVYS). Residues 22–55 (QCLGRVGPGGPPLGPYGGPLGGPGYGPVGYGGCG) form a left arm region. The tract at residues 56 to 103 (GYGGSGIGNVAVAGELPVAGSTGVMGQVPVIGAVEFAGPACAVGSVSI) is central domain. The tract at residues 104 to 119 (SGACGPTCGCGGSPYY) is right arm.

The protein belongs to the chorion protein family.

Functionally, this protein is one of many from the eggshell of the silk moth. The protein is Chorion class CA protein ERA.1 (ERA.1) of Bombyx mori (Silk moth).